A 159-amino-acid polypeptide reads, in one-letter code: NADH-quinone oxidoreductase subunit B (159 aa).

Residues Cys32, Cys33, Cys97, and Cys126 each coordinate [4Fe-4S] cluster.

It belongs to the complex I 20 kDa subunit family. In terms of assembly, NDH-1 is composed of 14 different subunits. Subunits NuoB, C, D, E, F, and G constitute the peripheral sector of the complex. The cofactor is [4Fe-4S] cluster.

Its subcellular location is the cell inner membrane. It catalyses the reaction a quinone + NADH + 5 H(+)(in) = a quinol + NAD(+) + 4 H(+)(out). Functionally, NDH-1 shuttles electrons from NADH, via FMN and iron-sulfur (Fe-S) centers, to quinones in the respiratory chain. The immediate electron acceptor for the enzyme in this species is believed to be ubiquinone. Couples the redox reaction to proton translocation (for every two electrons transferred, four hydrogen ions are translocated across the cytoplasmic membrane), and thus conserves the redox energy in a proton gradient. The chain is NADH-quinone oxidoreductase subunit B from Helicobacter pylori (strain J99 / ATCC 700824) (Campylobacter pylori J99).